A 355-amino-acid polypeptide reads, in one-letter code: 12-oxophytodienoate reductase-like protein (355 aa).

Residues 30 to 32 (ALT), Ala63, and Gln105 each bind FMN. 175 to 178 (NASS) is a substrate binding site. Residue Tyr181 is the Proton donor of the active site. Arg265 is a binding site for substrate. FMN is bound by residues Gly288 and 309–310 (GR).

It belongs to the NADH:flavin oxidoreductase/NADH oxidase family. Requires FMN as cofactor. As to expression, weakly expressed in flowers and roots.

Its subcellular location is the cytoplasm. Functionally, may be involved in the biosynthesis or metabolism of oxylipin signaling molecules. This is 12-oxophytodienoate reductase-like protein (OPR2) from Solanum lycopersicum (Tomato).